The following is a 440-amino-acid chain: Histidinol dehydrogenase homolog 2 (440 aa).

Zn(2+) is bound at residue His265. Catalysis depends on proton acceptor residues Glu333 and His334. His426 contributes to the Zn(2+) binding site.

Belongs to the histidinol dehydrogenase family. The cofactor is Zn(2+).

The sequence is that of Histidinol dehydrogenase homolog 2 from Mesorhizobium japonicum (strain LMG 29417 / CECT 9101 / MAFF 303099) (Mesorhizobium loti (strain MAFF 303099)).